The following is a 79-amino-acid chain: Putative defensin-like protein 203 (79 aa).

The N-terminal stretch at 1-27 is a signal peptide; that stretch reads MAKLIVNFSALLMIILLVSNGLPKAVA. 4 cysteine pairs are disulfide-bonded: Cys-30–Cys-79, Cys-40–Cys-64, Cys-49–Cys-73, and Cys-53–Cys-75.

It belongs to the DEFL family.

Its subcellular location is the secreted. The polypeptide is Putative defensin-like protein 203 (Arabidopsis thaliana (Mouse-ear cress)).